The sequence spans 283 residues: Pantothenate synthetase (283 aa).

ATP is bound at residue 30-37 (MGNLHDGH). Residue His-37 is the Proton donor of the active site. Residue Gln-61 coordinates (R)-pantoate. Position 61 (Gln-61) interacts with beta-alanine. 149–152 (GEKD) is a binding site for ATP. A (R)-pantoate-binding site is contributed by Gln-155. 186–189 (LSSR) provides a ligand contact to ATP.

This sequence belongs to the pantothenate synthetase family. In terms of assembly, homodimer.

It is found in the cytoplasm. It carries out the reaction (R)-pantoate + beta-alanine + ATP = (R)-pantothenate + AMP + diphosphate + H(+). It participates in cofactor biosynthesis; (R)-pantothenate biosynthesis; (R)-pantothenate from (R)-pantoate and beta-alanine: step 1/1. In terms of biological role, catalyzes the condensation of pantoate with beta-alanine in an ATP-dependent reaction via a pantoyl-adenylate intermediate. In Escherichia coli (strain ATCC 8739 / DSM 1576 / NBRC 3972 / NCIMB 8545 / WDCM 00012 / Crooks), this protein is Pantothenate synthetase.